The sequence spans 21 residues: Thylakoid lumenal 13.8 kDa protein (21 aa).

It localises to the plastid. The protein localises to the chloroplast thylakoid lumen. The chain is Thylakoid lumenal 13.8 kDa protein from Spinacia oleracea (Spinach).